A 491-amino-acid polypeptide reads, in one-letter code: Probable glycine dehydrogenase (decarboxylating) subunit 2 (491 aa).

Lysine 273 bears the N6-(pyridoxal phosphate)lysine mark.

The protein belongs to the GcvP family. C-terminal subunit subfamily. As to quaternary structure, the glycine cleavage system is composed of four proteins: P, T, L and H. In this organism, the P 'protein' is a heterodimer of two subunits. The cofactor is pyridoxal 5'-phosphate.

The catalysed reaction is N(6)-[(R)-lipoyl]-L-lysyl-[glycine-cleavage complex H protein] + glycine + H(+) = N(6)-[(R)-S(8)-aminomethyldihydrolipoyl]-L-lysyl-[glycine-cleavage complex H protein] + CO2. Its function is as follows. The glycine cleavage system catalyzes the degradation of glycine. The P protein binds the alpha-amino group of glycine through its pyridoxal phosphate cofactor; CO(2) is released and the remaining methylamine moiety is then transferred to the lipoamide cofactor of the H protein. The polypeptide is Probable glycine dehydrogenase (decarboxylating) subunit 2 (Bacillus cytotoxicus (strain DSM 22905 / CIP 110041 / 391-98 / NVH 391-98)).